A 203-amino-acid polypeptide reads, in one-letter code: ADP-ribosylation factor-like protein 6-interacting protein 1 (203 aa).

Topologically, residues 1-41 are cytoplasmic; it reads MAEGDNRSSNLLAVETASLEEQLQGWGEVMLMADKVLRWER. Residues 42–62 traverse the membrane as a helical segment; sequence AWFPPAIMGVVSLLFLIIYYL. Residues 63–65 lie on the Lumenal side of the membrane; sequence DPS. The chain crosses the membrane as a helical span at residues 66–86; sequence VLSGVSCFVMFLCLADYLVPI. Topologically, residues 87–133 are cytoplasmic; the sequence is LAPRIFGSNKWTTEQQQRFHEICSNLVKTRRRAVGWWKRLFSLKEEK. Residues 134-175 form a helical membrane-spanning segment; that stretch reads PKMYFMTMIISLAAVAWVGQQVHNLLLTYLIVTFVLLLPGLN. At 176–203 the chain is on the lumenal side; the sequence is QHGIILKYIGMAKREINKLLKQKEKKNE.

This sequence belongs to the ARL6ip family. Homooligomer. Heterodimer with ARL6IP5. Interacts with ARL6. Interacts with TMEM33. Interacts with ATL1. In terms of tissue distribution, expressed in the cerebral cortex, cerebellum, hippocampus, olfactory bulbs, medulla oblongate and limbic system (at protein level). Ubiquitous. Expressed in all hematopoietic cell lineages, with highest levels in early myeloid progenitor cells.

It is found in the endomembrane system. The protein localises to the endoplasmic reticulum membrane. It localises to the endoplasmic reticulum. Its function is as follows. Positively regulates SLC1A1/EAAC1-mediated glutamate transport by increasing its affinity for glutamate in a PKC activity-dependent manner. Promotes the catalytic efficiency of SLC1A1/EAAC1 probably by reducing its interaction with ARL6IP5, a negative regulator of SLC1A1/EAAC1-mediated glutamate transport. Plays a role in the formation and stabilization of endoplasmic reticulum tubules. Negatively regulates apoptosis, possibly by modulating the activity of caspase-9 (CASP9). Inhibits cleavage of CASP9-dependent substrates and downstream markers of apoptosis but not CASP9 itself. May be involved in protein transport, membrane trafficking, or cell signaling during hematopoietic maturation. The sequence is that of ADP-ribosylation factor-like protein 6-interacting protein 1 (Arl6ip1) from Mus musculus (Mouse).